A 283-amino-acid polypeptide reads, in one-letter code: Tropomyosin (283 aa).

Residues 1 to 283 (MDAIKKKMQA…LDSAFVELIL (283 aa)) adopt a coiled-coil conformation.

The protein belongs to the tropomyosin family. In terms of assembly, homodimer.

In terms of biological role, tropomyosin, in association with the troponin complex, plays a central role in the calcium dependent regulation of muscle contraction. In Locusta migratoria (Migratory locust), this protein is Tropomyosin.